We begin with the raw amino-acid sequence, 92 residues long: Large ribosomal subunit protein bL28 (92 aa).

This sequence belongs to the bacterial ribosomal protein bL28 family.

The protein is Large ribosomal subunit protein bL28 of Borrelia hermsii (strain HS1 / DAH).